We begin with the raw amino-acid sequence, 224 residues long: uncharacterized protein (224 aa).

The first 23 residues, 1-23 (MKKLLAAGIIGLLTVSIASPSFA), serve as a signal peptide directing secretion. Residues 31 to 224 (NVAVLFDGSG…WEKEAQKFTE (194 aa)) form the VWFA domain.

It to B.subtilis YwmC.

This is an uncharacterized protein from Bacillus subtilis (strain 168).